A 349-amino-acid polypeptide reads, in one-letter code: Early nodulin-like protein 2 (349 aa).

Positions 1–28 are cleaved as a signal peptide; sequence MTFLKMKSLSFFFTILLSLSTLFTISNA. A Phytocyanin domain is found at 29–130; sequence RKFNVGGSGA…GQKLNVVVIS (102 aa). Cysteine 84 and cysteine 118 are disulfide-bonded. The disordered stretch occupies residues 136–330; sequence TAQSPHAAAP…GQKKSSANGM (195 aa). Composition is skewed to low complexity over residues 145 to 201 and 224 to 234; these read PGSS…SPPG and TSPVSPSSAPM. Residues 249 to 260 are compositionally biased toward polar residues; the sequence is IPPSSAPMTSPP. Positions 263–312 are enriched in low complexity; that stretch reads MAPKSSSPVSNSPTVSPSLAPGGSTSSSPSDSPSGSAMGPSGDGPSAAGD. Serine 325 carries the GPI-anchor amidated serine lipid modification. The propeptide at 326–349 is removed in mature form; the sequence is SANGMTVMSITTVLSLVLTIFLSA.

Belongs to the early nodulin-like (ENODL) family. Mostly expressed in leaves and roots, and, to a lower extent, in seedlings, stems and flowers, but barely in seeds.

The protein localises to the cell membrane. In terms of biological role, may act as a carbohydrate transporter. The protein is Early nodulin-like protein 2 of Arabidopsis thaliana (Mouse-ear cress).